The following is an 889-amino-acid chain: DNA gyrase subunit A (889 aa).

Residues 35 to 501 enclose the Topo IIA-type catalytic domain; it reads LPDVRDGLKP…GFEDLEDEDL (467 aa). Tyr123 serves as the catalytic O-(5'-phospho-DNA)-tyrosine intermediate. Residues 528–534 carry the GyrA-box motif; it reads QNRGGRG. The interval 810–889 is disordered; it reads VKEDAEDETN…IQQSSDEDEE (80 aa). Residues 813-823 show a composition bias toward acidic residues; sequence DAEDETNEDEQ. The span at 863 to 875 shows a compositional bias: basic and acidic residues; the sequence is DGRIEVRQDFMDR. Over residues 876-889 the composition is skewed to acidic residues; that stretch reads VEEDIQQSSDEDEE.

Belongs to the type II topoisomerase GyrA/ParC subunit family. As to quaternary structure, heterotetramer, composed of two GyrA and two GyrB chains. In the heterotetramer, GyrA contains the active site tyrosine that forms a transient covalent intermediate with DNA, while GyrB binds cofactors and catalyzes ATP hydrolysis.

The protein resides in the cytoplasm. The enzyme catalyses ATP-dependent breakage, passage and rejoining of double-stranded DNA.. In terms of biological role, a type II topoisomerase that negatively supercoils closed circular double-stranded (ds) DNA in an ATP-dependent manner to modulate DNA topology and maintain chromosomes in an underwound state. Negative supercoiling favors strand separation, and DNA replication, transcription, recombination and repair, all of which involve strand separation. Also able to catalyze the interconversion of other topological isomers of dsDNA rings, including catenanes and knotted rings. Type II topoisomerases break and join 2 DNA strands simultaneously in an ATP-dependent manner. This chain is DNA gyrase subunit A, found in Staphylococcus aureus (strain N315).